A 246-amino-acid polypeptide reads, in one-letter code: MQFDIIGDVHGCYDELMELIDKLGYEYKRGSYDHPDGRLLAFVGDLTDRGPHSLEVIRLVSHMVKKKTAYYVPGNHCNKLYRYMIGRKVQVKHGLETTVAELNALSEEERIEVIAQFKELYEQAPLYHSFPEDKLVITHAGIREDDIGSYGKRVETFVLYGDITGETNPDGTPVRRDWAATYQGDWWIVYGHTPVRRPRIIHRTVNIDTGCVFGGALTALRFPEIEFVSIPSRQPLVSEKFRNFPG.

Belongs to the PrpE family. Requires Ni(2+) as cofactor.

It catalyses the reaction P(1),P(4)-bis(5'-guanosyl) tetraphosphate + H2O = GMP + GTP + 2 H(+). In terms of biological role, asymmetrically hydrolyzes Ap4p to yield AMP and ATP. This Halalkalibacterium halodurans (strain ATCC BAA-125 / DSM 18197 / FERM 7344 / JCM 9153 / C-125) (Bacillus halodurans) protein is Bis(5'-nucleosyl)-tetraphosphatase PrpE [asymmetrical].